The primary structure comprises 278 residues: N-terminal Xaa-Pro-Lys N-methyltransferase 2 (278 aa).

S-adenosyl-L-methionine-binding positions include Gly-123, Arg-128, Asp-145, 174-175 (LQ), Gln-190, and His-195.

Belongs to the methyltransferase superfamily. NTM1 family.

It localises to the nucleus. The enzyme catalyses N-terminal L-alanyl-L-prolyl-L-lysyl-[protein] + S-adenosyl-L-methionine = N-terminal N-methyl-L-alanyl-L-prolyl-L-lysyl-[protein] + S-adenosyl-L-homocysteine + H(+). It carries out the reaction N-terminal L-prolyl-L-prolyl-L-lysyl-[protein] + S-adenosyl-L-methionine = N-terminal N-methyl-L-prolyl-L-prolyl-L-lysyl-[protein] + S-adenosyl-L-homocysteine + H(+). The catalysed reaction is N-terminal L-seryl-L-prolyl-L-lysyl-[protein] + S-adenosyl-L-methionine = N-terminal N-methyl-L-seryl-L-prolyl-L-lysyl-[protein] + S-adenosyl-L-homocysteine + H(+). Alpha N-methyltransferase that methylates the N-terminus of target proteins containing the N-terminal motif [Ala/Pro/Ser]-Pro-Lys when the initiator Met is cleaved. Specifically catalyzes monomethylation of exposed alpha-amino group of Ala or Ser residue in the [Ala/Ser]-Pro-Lys motif and Pro in the Pro-Pro-Lys motif. Predominantly functions as a mono-methyltransferase but is also able to di-/tri-methylate the GPKRIA peptide and di-methylate the PPKRIA peptide (in vitro). May activate NTMT1 by priming its substrates for trimethylation. The protein is N-terminal Xaa-Pro-Lys N-methyltransferase 2 (ntmt2) of Danio rerio (Zebrafish).